Here is a 564-residue protein sequence, read N- to C-terminus: Eukaryotic translation initiation factor 3 subunit L (564 aa).

Ser-2 is subject to N-acetylserine. The region spanning Asp-331–Arg-537 is the PCI domain. Lys-465 and Lys-549 each carry N6-acetyllysine.

The protein belongs to the eIF-3 subunit L family. As to quaternary structure, component of the eukaryotic translation initiation factor 3 (eIF-3) complex, which is composed of 13 subunits: EIF3A, EIF3B, EIF3C, EIF3D, EIF3E, EIF3F, EIF3G, EIF3H, EIF3I, EIF3J, EIF3K, EIF3L and EIF3M. The eIF-3 complex appears to include 3 stable modules: module A is composed of EIF3A, EIF3B, EIF3G and EIF3I; module B is composed of EIF3F, EIF3H, and EIF3M; and module C is composed of EIF3C, EIF3D, EIF3E, EIF3K and EIF3L. EIF3C of module C binds EIF3B of module A and EIF3H of module B, thereby linking the three modules. EIF3J is a labile subunit that binds to the eIF-3 complex via EIF3B. The eIF-3 complex may interact with RPS6KB1 under conditions of nutrient depletion. Mitogenic stimulation may lead to binding and activation of a complex composed of MTOR and RPTOR, leading to phosphorylation and release of RPS6KB1 and binding of EIF4B to eIF-3. Interacts with RRN3.

The protein localises to the cytoplasm. Its function is as follows. Component of the eukaryotic translation initiation factor 3 (eIF-3) complex, which is required for several steps in the initiation of protein synthesis. The eIF-3 complex associates with the 40S ribosome and facilitates the recruitment of eIF-1, eIF-1A, eIF-2:GTP:methionyl-tRNAi and eIF-5 to form the 43S pre-initiation complex (43S PIC). The eIF-3 complex stimulates mRNA recruitment to the 43S PIC and scanning of the mRNA for AUG recognition. The eIF-3 complex is also required for disassembly and recycling of post-termination ribosomal complexes and subsequently prevents premature joining of the 40S and 60S ribosomal subunits prior to initiation. The eIF-3 complex specifically targets and initiates translation of a subset of mRNAs involved in cell proliferation, including cell cycling, differentiation and apoptosis, and uses different modes of RNA stem-loop binding to exert either translational activation or repression. The sequence is that of Eukaryotic translation initiation factor 3 subunit L (Eif3l) from Mus musculus (Mouse).